A 64-amino-acid polypeptide reads, in one-letter code: DNA gyrase inhibitor YacG (64 aa).

Cys9, Cys12, Cys28, and Cys32 together coordinate Zn(2+). Positions 45 to 64 (KRIPSAGDLSDSDDWSEQQP) are disordered. The span at 54 to 64 (SDSDDWSEQQP) shows a compositional bias: acidic residues.

It belongs to the DNA gyrase inhibitor YacG family. In terms of assembly, interacts with GyrB. Requires Zn(2+) as cofactor.

Its function is as follows. Inhibits all the catalytic activities of DNA gyrase by preventing its interaction with DNA. Acts by binding directly to the C-terminal domain of GyrB, which probably disrupts DNA binding by the gyrase. This Klebsiella pneumoniae subsp. pneumoniae (strain ATCC 700721 / MGH 78578) protein is DNA gyrase inhibitor YacG.